The primary structure comprises 435 residues: 5-methylthioadenosine/S-adenosylhomocysteine deaminase (435 aa).

Positions 65 and 67 each coordinate Zn(2+). 3 residues coordinate substrate: Glu94, Arg150, and His189. His216 lines the Zn(2+) pocket. 2 residues coordinate substrate: Glu219 and Asp304. Position 304 (Asp304) interacts with Zn(2+).

Belongs to the metallo-dependent hydrolases superfamily. MTA/SAH deaminase family. The cofactor is Zn(2+).

The catalysed reaction is S-adenosyl-L-homocysteine + H2O + H(+) = S-inosyl-L-homocysteine + NH4(+). The enzyme catalyses S-methyl-5'-thioadenosine + H2O + H(+) = S-methyl-5'-thioinosine + NH4(+). Functionally, catalyzes the deamination of 5-methylthioadenosine and S-adenosyl-L-homocysteine into 5-methylthioinosine and S-inosyl-L-homocysteine, respectively. Is also able to deaminate adenosine. The sequence is that of 5-methylthioadenosine/S-adenosylhomocysteine deaminase from Bacillus cereus (strain AH187).